The primary structure comprises 355 residues: Probable aldo-keto reductase 3 (355 aa).

Tyr-70 acts as the Proton donor in catalysis. His-138 is a binding site for substrate. 217–227 (SPLGRGFFSSG) is an NADP(+) binding site.

It belongs to the aldo/keto reductase family.

This chain is Probable aldo-keto reductase 3, found in Oryza sativa subsp. indica (Rice).